We begin with the raw amino-acid sequence, 532 residues long: Copalyl diphosphate synthase (532 aa).

Residues 313 to 318 (DTDDTA) carry the DXDDTA motif motif. The short motif at 443 to 449 (QSDDGSW) is the QXXDGSW motif element.

This sequence belongs to the terpene synthase family. Mg(2+) is required as a cofactor.

The catalysed reaction is (2E,6E,10E)-geranylgeranyl diphosphate = (+)-copalyl diphosphate. In terms of biological role, involved in the biosynthesis of the mercapturic acid derivative diterpene cyslabdan A, a potentiator of the beta-lactam antibiotic imipenem. Catalyzes the conversion of geranylgeranyl diphosphate (GGDP) into (+)-copalyl diphosphate. The chain is Copalyl diphosphate synthase from Streptomyces cyslabdanicus.